Reading from the N-terminus, the 550-residue chain is Glucose-6-phosphate isomerase (550 aa).

The Proton donor role is filled by Glu-356. Residues His-387 and Lys-515 contribute to the active site.

Belongs to the GPI family.

The protein resides in the cytoplasm. The enzyme catalyses alpha-D-glucose 6-phosphate = beta-D-fructose 6-phosphate. It participates in carbohydrate biosynthesis; gluconeogenesis. The protein operates within carbohydrate degradation; glycolysis; D-glyceraldehyde 3-phosphate and glycerone phosphate from D-glucose: step 2/4. Catalyzes the reversible isomerization of glucose-6-phosphate to fructose-6-phosphate. This is Glucose-6-phosphate isomerase from Syntrophobacter fumaroxidans (strain DSM 10017 / MPOB).